The chain runs to 225 residues: Holliday junction branch migration complex subunit RuvA (225 aa).

A domain I region spans residues 1 to 68; that stretch reads MIGWLQGQKV…DDGSSLFGFP (68 aa). The interval 69–147 is domain II; sequence ERRERDMFRT…EFSCRDPGMS (79 aa). A flexible linker region spans residues 148–158; that stretch reads LVDNGVIDSHQ. Residues 159–225 form a domain III region; sequence LKDSSLHELQ…SLRWLSQEAA (67 aa).

This sequence belongs to the RuvA family. In terms of assembly, homotetramer. Forms an RuvA(8)-RuvB(12)-Holliday junction (HJ) complex. HJ DNA is sandwiched between 2 RuvA tetramers; dsDNA enters through RuvA and exits via RuvB. An RuvB hexamer assembles on each DNA strand where it exits the tetramer. Each RuvB hexamer is contacted by two RuvA subunits (via domain III) on 2 adjacent RuvB subunits; this complex drives branch migration. In the full resolvosome a probable DNA-RuvA(4)-RuvB(12)-RuvC(2) complex forms which resolves the HJ.

It localises to the cytoplasm. In terms of biological role, the RuvA-RuvB-RuvC complex processes Holliday junction (HJ) DNA during genetic recombination and DNA repair, while the RuvA-RuvB complex plays an important role in the rescue of blocked DNA replication forks via replication fork reversal (RFR). RuvA specifically binds to HJ cruciform DNA, conferring on it an open structure. The RuvB hexamer acts as an ATP-dependent pump, pulling dsDNA into and through the RuvAB complex. HJ branch migration allows RuvC to scan DNA until it finds its consensus sequence, where it cleaves and resolves the cruciform DNA. This Prochlorococcus marinus (strain MIT 9313) protein is Holliday junction branch migration complex subunit RuvA.